We begin with the raw amino-acid sequence, 299 residues long: Probable 3-hydroxyisobutyrate dehydrogenase-like 2, mitochondrial (299 aa).

NAD(+) is bound by residues 14 to 43 (TRIG…TVYA) and S108. K182 is a catalytic residue. K250 provides a ligand contact to NAD(+).

It belongs to the HIBADH-related family. 3-hydroxyisobutyrate dehydrogenase subfamily.

It is found in the mitochondrion. The enzyme catalyses 3-hydroxy-2-methylpropanoate + NAD(+) = 2-methyl-3-oxopropanoate + NADH + H(+). The protein operates within amino-acid degradation; L-valine degradation. The protein is Probable 3-hydroxyisobutyrate dehydrogenase-like 2, mitochondrial of Arabidopsis thaliana (Mouse-ear cress).